The following is a 571-amino-acid chain: Dihydroxy-acid dehydratase (571 aa).

A [2Fe-2S] cluster-binding site is contributed by Cys56. Asp88 is a Mg(2+) binding site. Cys129 contributes to the [2Fe-2S] cluster binding site. 2 residues coordinate Mg(2+): Asp130 and Lys131. At Lys131 the chain carries N6-carboxylysine. A [2Fe-2S] cluster-binding site is contributed by Cys201. Glu452 contacts Mg(2+). The active-site Proton acceptor is Ser478.

Belongs to the IlvD/Edd family. As to quaternary structure, homodimer. [2Fe-2S] cluster is required as a cofactor. It depends on Mg(2+) as a cofactor.

The enzyme catalyses (2R)-2,3-dihydroxy-3-methylbutanoate = 3-methyl-2-oxobutanoate + H2O. It catalyses the reaction (2R,3R)-2,3-dihydroxy-3-methylpentanoate = (S)-3-methyl-2-oxopentanoate + H2O. The protein operates within amino-acid biosynthesis; L-isoleucine biosynthesis; L-isoleucine from 2-oxobutanoate: step 3/4. It participates in amino-acid biosynthesis; L-valine biosynthesis; L-valine from pyruvate: step 3/4. Functionally, functions in the biosynthesis of branched-chain amino acids. Catalyzes the dehydration of (2R,3R)-2,3-dihydroxy-3-methylpentanoate (2,3-dihydroxy-3-methylvalerate) into 2-oxo-3-methylpentanoate (2-oxo-3-methylvalerate) and of (2R)-2,3-dihydroxy-3-methylbutanoate (2,3-dihydroxyisovalerate) into 2-oxo-3-methylbutanoate (2-oxoisovalerate), the penultimate precursor to L-isoleucine and L-valine, respectively. This chain is Dihydroxy-acid dehydratase, found in Streptococcus mutans serotype c (strain ATCC 700610 / UA159).